A 364-amino-acid chain; its full sequence is Protein leg1a (364 aa).

Residues 1 to 22 (MSEMGFLRSVAAVLLLAVFSHA) form the signal peptide. The N-linked (GlcNAc...) asparagine glycan is linked to Asn-70.

The protein belongs to the LEG1 family. As to expression, detected in all tissues tested, with the highest levels in serum (at protein level). At mRNA level, only expressed in liver.

The protein localises to the secreted. Its function is as follows. Important for early development of liver, exocrine pancreas and intestine, probably through cell cycle regulation. In liver, its function is partially redundant with leg1b function. This chain is Protein leg1a, found in Danio rerio (Zebrafish).